The chain runs to 330 residues: DNA-directed RNA polymerase subunit alpha (330 aa).

An alpha N-terminal domain (alpha-NTD) region spans residues 1–237 (MYTEINEMLT…RQLHAFVDMK (237 aa)). Residues 251–330 (FDPVLLRSVD…ENWPPASLGE (80 aa)) form an alpha C-terminal domain (alpha-CTD) region.

This sequence belongs to the RNA polymerase alpha chain family. In terms of assembly, homodimer. The RNAP catalytic core consists of 2 alpha, 1 beta, 1 beta' and 1 omega subunit. When a sigma factor is associated with the core the holoenzyme is formed, which can initiate transcription.

The enzyme catalyses RNA(n) + a ribonucleoside 5'-triphosphate = RNA(n+1) + diphosphate. Functionally, DNA-dependent RNA polymerase catalyzes the transcription of DNA into RNA using the four ribonucleoside triphosphates as substrates. This chain is DNA-directed RNA polymerase subunit alpha, found in Legionella pneumophila (strain Paris).